The primary structure comprises 142 residues: Protein-export protein SecB (142 aa).

It belongs to the SecB family. As to quaternary structure, homotetramer, a dimer of dimers. One homotetramer interacts with 1 SecA dimer.

The protein localises to the cytoplasm. One of the proteins required for the normal export of preproteins out of the cell cytoplasm. It is a molecular chaperone that binds to a subset of precursor proteins, maintaining them in a translocation-competent state. It also specifically binds to its receptor SecA. In Buchnera aphidicola subsp. Acyrthosiphon pisum (strain 5A), this protein is Protein-export protein SecB.